A 445-amino-acid chain; its full sequence is Exodeoxyribonuclease 7 large subunit (445 aa).

The protein belongs to the XseA family. As to quaternary structure, heterooligomer composed of large and small subunits.

Its subcellular location is the cytoplasm. It catalyses the reaction Exonucleolytic cleavage in either 5'- to 3'- or 3'- to 5'-direction to yield nucleoside 5'-phosphates.. Bidirectionally degrades single-stranded DNA into large acid-insoluble oligonucleotides, which are then degraded further into small acid-soluble oligonucleotides. This Staphylococcus epidermidis (strain ATCC 35984 / DSM 28319 / BCRC 17069 / CCUG 31568 / BM 3577 / RP62A) protein is Exodeoxyribonuclease 7 large subunit.